Here is a 541-residue protein sequence, read N- to C-terminus: Protein wntless homolog (541 aa).

The Cytoplasmic segment spans residues 1–15 (MAGAIIENMGTKKLC). The chain crosses the membrane as a helical span at residues 16–36 (IVGGILLVFQIIAFLVGGLIA). Over 37 to 232 (PGPTTAVSYM…GIHQNGGFTK (196 aa)) the chain is Lumenal. Residues 101-232 (MEMSPWFQFM…GIHQNGGFTK (132 aa)) are interaction with Wnt proteins. A helical transmembrane segment spans residues 233–253 (VWFAMKTFLTPSIFIIMVWYW). Over 254-268 (RRITMMSRPPVLLEK) the chain is Cytoplasmic. The helical transmembrane segment at 269–289 (VIFALGISMTFINIPVEWFSI) threads the bilayer. The Lumenal portion of the chain corresponds to 290 to 303 (GFDWTWMLLFGDIR). The helical transmembrane segment at 304–324 (QGIFYAMLLSFWIIFCGEHMM) threads the bilayer. The Cytoplasmic portion of the chain corresponds to 325-331 (DQHERNH). The helical transmembrane segment at 332 to 352 (IAGYWKQVGPIAVGSFCLFIF) threads the bilayer. Over 353–380 (DMCERGVQLTNPFYSIWTTDIGTELAMA) the chain is Lumenal. Residues 381–401 (FIIVAGICLCLYFLFLCFMVF) form a helical membrane-spanning segment. Over 402–431 (QVFRNISGKQSSLPAMSKVRRLHYEGLIFR) the chain is Cytoplasmic. A helical membrane pass occupies residues 432–452 (FKFLMLITLACAAMTVIFFIV). Over 453-471 (SQVTEGHWKWGGVTVQVNS) the chain is Lumenal. A helical transmembrane segment spans residues 472–492 (AFFTGIYGMWNLYVFALMFLY). Residues 493-541 (APSHKNYGEDQSNGDLGVHSGEELQLTTTITHVDGPTEIYKLTRKEAQE) are Cytoplasmic-facing.

Belongs to the wntless family. As to quaternary structure, interacts with WNT3A. Interacts with WNT1, WNT3 and WNT5A.

Its subcellular location is the golgi apparatus membrane. It localises to the cytoplasmic vesicle membrane. It is found in the cell membrane. The protein localises to the endoplasmic reticulum membrane. The protein resides in the early endosome membrane. Functionally, regulates Wnt proteins sorting and secretion in a feedback regulatory mechanism. This reciprocal interaction plays a key role in the regulation of expression, subcellular location, binding and organelle-specific association of Wnt proteins. Also plays an important role in establishment of the anterior-posterior body axis formation during development. This Pongo abelii (Sumatran orangutan) protein is Protein wntless homolog (WLS).